Here is a 493-residue protein sequence, read N- to C-terminus: Exosome complex component Rrp41 (493 aa).

2 disordered regions span residues 244-264 (VSEE…PSPV) and 291-493 (LASE…EKDE). Residues 249 to 259 (APEKGAEKEVL) are compositionally biased toward basic and acidic residues. The span at 297-377 (PDFEDELEEE…ALEEETELEA (81 aa)) shows a compositional bias: acidic residues. A compositionally biased stretch (basic and acidic residues) spans 383–400 (PELKEFDEIEARLEKEDA). The segment covering 401–471 (SIEAEEEIEP…EAEEEPEEEK (71 aa)) has biased composition (acidic residues). Residues 472–493 (SEGPWKVVKDPSEAGTRGEKDE) show a composition bias toward basic and acidic residues.

The protein belongs to the RNase PH family. Rrp41 subfamily. In terms of assembly, component of the archaeal exosome complex. Forms a hexameric ring-like arrangement composed of 3 Rrp41-Rrp42 heterodimers. The hexameric ring associates with a trimer of Rrp4 and/or Csl4 subunits.

Its subcellular location is the cytoplasm. In terms of biological role, catalytic component of the exosome, which is a complex involved in RNA degradation. Has 3'-&gt;5' exoribonuclease activity. Can also synthesize heteromeric RNA-tails. This chain is Exosome complex component Rrp41, found in Methanosarcina mazei (strain ATCC BAA-159 / DSM 3647 / Goe1 / Go1 / JCM 11833 / OCM 88) (Methanosarcina frisia).